Reading from the N-terminus, the 443-residue chain is Xaa-Pro dipeptidase (443 aa).

Mn(2+)-binding residues include aspartate 246, aspartate 257, histidine 339, glutamate 384, and glutamate 423.

Belongs to the peptidase M24B family. Bacterial-type prolidase subfamily. It depends on Mn(2+) as a cofactor.

The enzyme catalyses Xaa-L-Pro dipeptide + H2O = an L-alpha-amino acid + L-proline. Functionally, splits dipeptides with a prolyl residue in the C-terminal position. The polypeptide is Xaa-Pro dipeptidase (Yersinia pseudotuberculosis serotype I (strain IP32953)).